Here is a 464-residue protein sequence, read N- to C-terminus: Kynurenine 3-monooxygenase (464 aa).

It belongs to the aromatic-ring hydroxylase family. KMO subfamily. It depends on FAD as a cofactor.

The catalysed reaction is L-kynurenine + NADPH + O2 + H(+) = 3-hydroxy-L-kynurenine + NADP(+) + H2O. It functions in the pathway cofactor biosynthesis; NAD(+) biosynthesis; quinolinate from L-kynurenine: step 1/3. Functionally, catalyzes the hydroxylation of L-kynurenine (L-Kyn) to form 3-hydroxy-L-kynurenine (L-3OHKyn). Required for synthesis of quinolinic acid. The protein is Kynurenine 3-monooxygenase of Myxococcus xanthus (strain DK1622).